An 861-amino-acid polypeptide reads, in one-letter code: Seed linoleate 9S-lipoxygenase-3 (861 aa).

The PLAT domain maps to Q41–A166. A Lipoxygenase domain is found at T169–I861. The interval N215–D257 is disordered. Residues R237–T246 show a composition bias toward basic residues. Basic and acidic residues predominate over residues R247 to D257. Fe cation-binding residues include H522, H527, H713, N717, and I861.

It belongs to the lipoxygenase family. Fe cation serves as cofactor.

It localises to the cytoplasm. The catalysed reaction is (9Z,12Z)-octadecadienoate + O2 = (9S)-hydroperoxy-(10E,12Z)-octadecadienoate. It functions in the pathway lipid metabolism; oxylipin biosynthesis. In terms of biological role, plant lipoxygenase may be involved in a number of diverse aspects of plant physiology including growth and development, pest resistance, and senescence or responses to wounding. It catalyzes the hydroperoxidation of lipids containing a cis,cis-1,4-pentadiene structure. The polypeptide is Seed linoleate 9S-lipoxygenase-3 (LOX1.3) (Pisum sativum (Garden pea)).